Reading from the N-terminus, the 185-residue chain is ADP-ribosylation factor (185 aa).

Glycine 2 carries N-myristoyl glycine lipidation. Residues glycine 27–threonine 34, aspartate 70–glutamine 74, and asparagine 129–aspartate 132 contribute to the GTP site.

This sequence belongs to the small GTPase superfamily. Arf family.

The protein resides in the golgi apparatus. GTP-binding protein involved in protein trafficking; may modulate vesicle budding and uncoating within the Golgi apparatus. The polypeptide is ADP-ribosylation factor (Neurospora crassa (strain ATCC 24698 / 74-OR23-1A / CBS 708.71 / DSM 1257 / FGSC 987)).